The sequence spans 214 residues: Thymidylate kinase (214 aa).

14-21 (GLEGAGKT) contributes to the ATP binding site.

It belongs to the thymidylate kinase family.

It carries out the reaction dTMP + ATP = dTDP + ADP. Phosphorylation of dTMP to form dTDP in both de novo and salvage pathways of dTTP synthesis. This Mannheimia succiniciproducens (strain KCTC 0769BP / MBEL55E) protein is Thymidylate kinase.